Reading from the N-terminus, the 142-residue chain is 3-hydroxyacyl-[acyl-carrier-protein] dehydratase FabZ (142 aa).

Residue His50 is part of the active site.

Belongs to the thioester dehydratase family. FabZ subfamily.

The protein localises to the cytoplasm. It catalyses the reaction a (3R)-hydroxyacyl-[ACP] = a (2E)-enoyl-[ACP] + H2O. Functionally, involved in unsaturated fatty acids biosynthesis. Catalyzes the dehydration of short chain beta-hydroxyacyl-ACPs and long chain saturated and unsaturated beta-hydroxyacyl-ACPs. This is 3-hydroxyacyl-[acyl-carrier-protein] dehydratase FabZ from Clostridium botulinum (strain Alaska E43 / Type E3).